Here is a 245-residue protein sequence, read N- to C-terminus: 1-(5-phosphoribosyl)-5-[(5-phosphoribosylamino)methylideneamino] imidazole-4-carboxamide isomerase (245 aa).

D11 (proton acceptor) is an active-site residue. The active-site Proton donor is the D132.

Belongs to the HisA/HisF family.

It is found in the cytoplasm. The enzyme catalyses 1-(5-phospho-beta-D-ribosyl)-5-[(5-phospho-beta-D-ribosylamino)methylideneamino]imidazole-4-carboxamide = 5-[(5-phospho-1-deoxy-D-ribulos-1-ylimino)methylamino]-1-(5-phospho-beta-D-ribosyl)imidazole-4-carboxamide. The protein operates within amino-acid biosynthesis; L-histidine biosynthesis; L-histidine from 5-phospho-alpha-D-ribose 1-diphosphate: step 4/9. The protein is 1-(5-phosphoribosyl)-5-[(5-phosphoribosylamino)methylideneamino] imidazole-4-carboxamide isomerase of Geobacillus thermodenitrificans (strain NG80-2).